The following is a 218-amino-acid chain: Adenylate kinase (218 aa).

Glycine 10 to threonine 15 is an ATP binding site. Positions serine 30–valine 59 are NMP. Residues threonine 31, arginine 36, glutamine 57 to valine 59, glycine 85 to arginine 88, and glutamine 92 contribute to the AMP site. Positions glycine 122–aspartate 159 are LID. Residues arginine 123 and serine 132–tyrosine 133 contribute to the ATP site. Residues arginine 156 and arginine 167 each contribute to the AMP site. Residue glycine 203 participates in ATP binding.

It belongs to the adenylate kinase family. As to quaternary structure, monomer.

The protein localises to the cytoplasm. It carries out the reaction AMP + ATP = 2 ADP. It functions in the pathway purine metabolism; AMP biosynthesis via salvage pathway; AMP from ADP: step 1/1. Functionally, catalyzes the reversible transfer of the terminal phosphate group between ATP and AMP. Plays an important role in cellular energy homeostasis and in adenine nucleotide metabolism. The sequence is that of Adenylate kinase from Chlorobium chlorochromatii (strain CaD3).